A 179-amino-acid polypeptide reads, in one-letter code: MTRLEKIYREKVVPVMQKEFSYSSSMQLPGIEKISLNIGLGAASQNNKLMEEAVAELSAIAGQKAVVTRAKKSIAAFKLREGMPIGARVTLRRDRMWDFLDKLMNFALPRVRDFRGIPDRGFDGRGNFTLGIKEHTIFPELEVDRVENPKGMNITIVTTAATDKEGKFLLDQLGMPFRK.

It belongs to the universal ribosomal protein uL5 family. Part of the 50S ribosomal subunit; part of the 5S rRNA/L5/L18/L25 subcomplex. Contacts the 5S rRNA and the P site tRNA. Forms a bridge to the 30S subunit in the 70S ribosome.

In terms of biological role, this is one of the proteins that bind and probably mediate the attachment of the 5S RNA into the large ribosomal subunit, where it forms part of the central protuberance. In the 70S ribosome it contacts protein S13 of the 30S subunit (bridge B1b), connecting the 2 subunits; this bridge is implicated in subunit movement. Contacts the P site tRNA; the 5S rRNA and some of its associated proteins might help stabilize positioning of ribosome-bound tRNAs. The protein is Large ribosomal subunit protein uL5 of Desulfovibrio desulfuricans (strain ATCC 27774 / DSM 6949 / MB).